The chain runs to 134 residues: Ribosome-binding factor A (134 aa).

This sequence belongs to the RbfA family. As to quaternary structure, monomer. Binds 30S ribosomal subunits, but not 50S ribosomal subunits or 70S ribosomes.

The protein resides in the cytoplasm. In terms of biological role, one of several proteins that assist in the late maturation steps of the functional core of the 30S ribosomal subunit. Associates with free 30S ribosomal subunits (but not with 30S subunits that are part of 70S ribosomes or polysomes). Required for efficient processing of 16S rRNA. May interact with the 5'-terminal helix region of 16S rRNA. The sequence is that of Ribosome-binding factor A from Psychrobacter cryohalolentis (strain ATCC BAA-1226 / DSM 17306 / VKM B-2378 / K5).